We begin with the raw amino-acid sequence, 234 residues long: Sugar fermentation stimulation protein A (234 aa).

Positions 201–220 form a DNA-binding region, H-T-H motif; sequence LLSEAQNKGVEVLAYKAELS.

Belongs to the SfsA family.

Binds to DNA non-specifically. Could be a regulatory factor involved in maltose metabolism. The sequence is that of Sugar fermentation stimulation protein A from Salmonella gallinarum (strain 287/91 / NCTC 13346).